Here is a 279-residue protein sequence, read N- to C-terminus: MPPSNSTFDTCFHIHMVSDSTGETLMEVMRASVAQFEGTTPLEHLYALVRSSKQLDRVLDEVEAYPGVIMYTIVNADLRRELETRCVELGVPAIAILDPMLATLSAYLGRPVASRAGAQRSLDADYYRRIDALNYAMAHDDGQGDDFEGADIVLLGVSRTSKTPTSVYLAHRGFRAANIPLVKDVPIPEAVFSLRNPLVVGLTASPERIVQIRRNRLLSLNEDRDTNYIDDFAVREEILFAKRLYAKHKWPTIDVTRRSIEETAAKIINLLMEKRNMTV.

156–163 (GVSRTSKT) provides a ligand contact to ADP.

This sequence belongs to the pyruvate, phosphate/water dikinase regulatory protein family. PDRP subfamily.

It carries out the reaction N(tele)-phospho-L-histidyl/L-threonyl-[pyruvate, phosphate dikinase] + ADP = N(tele)-phospho-L-histidyl/O-phospho-L-threonyl-[pyruvate, phosphate dikinase] + AMP + H(+). The catalysed reaction is N(tele)-phospho-L-histidyl/O-phospho-L-threonyl-[pyruvate, phosphate dikinase] + phosphate + H(+) = N(tele)-phospho-L-histidyl/L-threonyl-[pyruvate, phosphate dikinase] + diphosphate. Its function is as follows. Bifunctional serine/threonine kinase and phosphorylase involved in the regulation of the pyruvate, phosphate dikinase (PPDK) by catalyzing its phosphorylation/dephosphorylation. The sequence is that of Putative pyruvate, phosphate dikinase regulatory protein from Maricaulis maris (strain MCS10) (Caulobacter maris).